We begin with the raw amino-acid sequence, 722 residues long: Dipeptidyl aminopeptidase BII (722 aa).

The first 24 residues, 1–24 (MRPNLLAAAIAVPLSLLAAQIAQA), serve as a signal peptide directing secretion. 2 disulfide bridges follow: cysteine 70–cysteine 87 and cysteine 166–cysteine 174. Histidine 86 acts as the Charge relay system in catalysis. Substrate is bound at residue 215 to 216 (NW). Catalysis depends on aspartate 224, which acts as the Charge relay system. Residues asparagine 330, 655–657 (GNS), and 673–674 (FD) contribute to the substrate site. The Charge relay system role is filled by serine 657.

Belongs to the peptidase S46 family. In terms of assembly, homodimer.

Completely inhibited by the serine protease inhibitor diisopropyl fluorophosphate (DFP) and potently inhibited by 0.5 mM ZnCl(2), 10 mM o-phenanthlorine, phenylmethanesulfonyl fluoride (PMSF) and N-tosyl-L-phenyl-alanyl chloromethyl ketone (TPCK), but not by N-tosyl-L-lysyl chloromethyl ketone (TLCK). Activity is not affected significantly by protease inhibitors, such as chymostatin, leupeptin, N-ethylmaleimide (NEM), iodoacetate (IAA), L-trans-epoxysuccinyl-leucylamido(4-guanido)butane (E64) and pepstatin A or by CoCl(2), CaCl(2) and EDTA. In terms of biological role, exopeptidase that catalyzes the removal of dipeptide units (NH2-P2-P1-) from the free amino termini of oligopeptides and small proteins. Peptide digestion is sequential and substrate recognition is non-specific, with the exception that Pro is not suitable as a P1 residue. Removes many residues of bioactive oligopeptides such as angiotensin I and neuromedin N and also cleaves oxidized insulin B chain. Able to hydrolyze an X-Pro bond, an imido bond. No endopeptidase activity. May play a physiological role in feeding. The protein is Dipeptidyl aminopeptidase BII of Pseudoxanthomonas mexicana.